The following is a 595-amino-acid chain: Merlin (595 aa).

Ser13 is modified (phosphoserine). In terms of domain architecture, FERM spans 22-311 (FTVRIVTMDA…GNHDLFMRRR (290 aa)). A Phosphoserine; by PAK modification is found at Ser518.

Interacts with NHERF1, HGS and AGAP2. Interacts with SGSM3. Interacts (via FERM domain) with MPP1. Interacts with LAYN and WWC1. Interacts with the CUL4A-RBX1-DDB1-VprBP/DCAF1 E3 ubiquitin-protein ligase complex. The unphosphorylated form interacts (via FERM domain) with VPRBP/DCAF1. Interacts (via FERM domain) with NOP53; the interaction is direct. Interacts with SCHIP1; the interaction is direct. In terms of processing, phosphorylation of Ser-518 inhibits nuclear localization by disrupting the intramolecular association of the FERM domain with the C-terminal tail. Ubiquitinated by the CUL4A-RBX1-DDB1-DCAF1/VprBP E3 ubiquitin-protein ligase complex for ubiquitination and subsequent proteasome-dependent degradation. Post-translationally, phosphorylation of Ser-518 inhibits nuclear localization by disrupting the intramolecular association of the FERM domain with the C-terminal tail. The dephosphorylation of Ser-518 favors the interaction with NOP53.

It localises to the cell membrane. Its subcellular location is the cell projection. The protein localises to the cytoplasm. The protein resides in the cytoskeleton. It is found in the nucleus. Probable regulator of the Hippo/SWH (Sav/Wts/Hpo) signaling pathway, a signaling pathway that plays a pivotal role in tumor suppression by restricting proliferation and promoting apoptosis. Along with WWC1 can synergistically induce the phosphorylation of LATS1 and LATS2 and can probably function in the regulation of the Hippo/SWH (Sav/Wts/Hpo) signaling pathway. May act as a membrane stabilizing protein. May inhibit PI3 kinase by binding to AGAP2 and impairing its stimulating activity. Suppresses cell proliferation and tumorigenesis by inhibiting the CUL4A-RBX1-DDB1-VprBP/DCAF1 E3 ubiquitin-protein ligase complex. This Papio anubis (Olive baboon) protein is Merlin (NF2).